Consider the following 256-residue polypeptide: Pimeloyl-[acyl-carrier protein] methyl ester esterase (256 aa).

An AB hydrolase-1 domain is found at 15–242; it reads HLVLLHGWGL…AAHAPFISHP (228 aa). Residues tryptophan 22, 82 to 83, and 143 to 147 each bind substrate; these read SL and FLALQ. The active-site Nucleophile is serine 82. Residues aspartate 207 and histidine 235 contribute to the active site. Histidine 235 contacts substrate.

This sequence belongs to the AB hydrolase superfamily. Carboxylesterase BioH family. Monomer.

The protein localises to the cytoplasm. The catalysed reaction is 6-carboxyhexanoyl-[ACP] methyl ester + H2O = 6-carboxyhexanoyl-[ACP] + methanol + H(+). The protein operates within cofactor biosynthesis; biotin biosynthesis. Functionally, the physiological role of BioH is to remove the methyl group introduced by BioC when the pimeloyl moiety is complete. It allows to synthesize pimeloyl-ACP via the fatty acid synthetic pathway through the hydrolysis of the ester bonds of pimeloyl-ACP esters. This is Pimeloyl-[acyl-carrier protein] methyl ester esterase from Shigella dysenteriae serotype 1 (strain Sd197).